The primary structure comprises 58 residues: Large ribosomal subunit protein bL32 (58 aa).

The span at Met-1–Gln-20 shows a compositional bias: basic residues. The interval Met-1–Asn-26 is disordered.

The protein belongs to the bacterial ribosomal protein bL32 family.

The polypeptide is Large ribosomal subunit protein bL32 (Desulfatibacillum aliphaticivorans).